The chain runs to 158 residues: Single-stranded DNA-binding protein 2 (158 aa).

Residues methionine 1 to leucine 107 enclose the SSB domain. A disordered region spans residues arginine 109–threonine 158.

In terms of assembly, homotetramer.

The sequence is that of Single-stranded DNA-binding protein 2 (ssb2) from Streptomyces avermitilis (strain ATCC 31267 / DSM 46492 / JCM 5070 / NBRC 14893 / NCIMB 12804 / NRRL 8165 / MA-4680).